Reading from the N-terminus, the 351-residue chain is F-box protein At1g47810 (351 aa).

The 47-residue stretch at 8-54 (LQSLDPIPVDVLFEIFLNLPAKFLARFVCVSKLWAKIIRNQDFIRSF) folds into the F-box domain.

The polypeptide is F-box protein At1g47810 (Arabidopsis thaliana (Mouse-ear cress)).